Here is a 163-residue protein sequence, read N- to C-terminus: Nucleotide-binding protein NTHI1194 (163 aa).

It belongs to the YajQ family.

In terms of biological role, nucleotide-binding protein. This Haemophilus influenzae (strain 86-028NP) protein is Nucleotide-binding protein NTHI1194.